An 845-amino-acid polypeptide reads, in one-letter code: Matrin-3 (845 aa).

Residue serine 2 is modified to N-acetylserine. Residue lysine 3 is modified to N6-acetyllysine; alternate. Lysine 3 is covalently cross-linked (Glycyl lysine isopeptide (Lys-Gly) (interchain with G-Cter in SUMO2); alternate). Phosphoserine is present on residues serine 4, serine 9, serine 14, serine 22, serine 41, serine 118, and serine 126. Glycyl lysine isopeptide (Lys-Gly) (interchain with G-Cter in SUMO2) cross-links involve residues lysine 132 and lysine 146. Disordered stretches follow at residues 147 to 174 (RRRT…YRVP) and 187 to 213 (DSFD…ESGY). Phosphothreonine is present on threonine 150. At serine 157 the chain carries Phosphoserine. The residue at position 158 (tyrosine 158) is a Phosphotyrosine. Residues 160–174 (RDGRSATREPPYRVP) show a composition bias toward basic and acidic residues. 3 positions are modified to phosphoserine: serine 164, serine 188, and serine 195. Residues 201 to 213 (DYDHGSRSQESGY) show a composition bias toward basic and acidic residues. At tyrosine 202 the chain carries Phosphotyrosine. Phosphoserine is present on residues serine 206, serine 208, and serine 211. At tyrosine 219 the chain carries Phosphotyrosine. At serine 234 the chain carries Phosphoserine. A Glycyl lysine isopeptide (Lys-Gly) (interchain with G-Cter in SUMO2) cross-link involves residue lysine 245. Serine 264 carries the phosphoserine modification. Lysine 269 participates in a covalent cross-link: Glycyl lysine isopeptide (Lys-Gly) (interchain with G-Cter in SUMO2). Serine 275 is subject to Phosphoserine. The interval 342–394 (PFMLQQSTNPAPGILGPPPPSFHLGGPAVGPRGNLGAGNGNLQGPRHMQKGRV) is disordered. Residues 398–473 (RVVHIMDFQR…KPVRVHLSQK (76 aa)) enclose the RRM 1 domain. Glycyl lysine isopeptide (Lys-Gly) (interchain with G-Cter in SUMO2) cross-links involve residues lysine 478, lysine 487, and lysine 491. The RRM 2 domain maps to 496 to 571 (RVIHLSNLPH…RCVKVDLSEK (76 aa)). Phosphoserine occurs at positions 509 and 511. Lysine 515 is covalently cross-linked (Glycyl lysine isopeptide (Lys-Gly) (interchain with G-Cter in SUMO2)). Lysine 522 is subject to N6-acetyllysine; alternate. Lysine 522 is covalently cross-linked (Glycyl lysine isopeptide (Lys-Gly) (interchain with G-Cter in SUMO2); alternate). Serine 533 is modified (phosphoserine). Glycyl lysine isopeptide (Lys-Gly) (interchain with G-Cter in SUMO2) cross-links involve residues lysine 554 and lysine 555. Lysine 571 is modified (N6-acetyllysine). The disordered stretch occupies residues 588 to 785 (KKDKSRKRSY…EYRIGPYQPN (198 aa)). Serine 596, serine 598, serine 604, and serine 606 each carry phosphoserine. Residues 600 to 643 (DGKESPSDKKSKTDGAQKTENPAEGKEQEEKSGEDGEKDTKDDQ) show a composition bias toward basic and acidic residues. Glycyl lysine isopeptide (Lys-Gly) (interchain with G-Cter in SUMO2) cross-links involve residues lysine 617 and lysine 630. Over residues 653 to 665 (ESEDELLVDEEEA) the composition is skewed to acidic residues. Phosphoserine is present on residues serine 654, serine 671, serine 673, and serine 674. Threonine 679 is modified (phosphothreonine). The residue at position 689 (serine 689) is a Phosphoserine. A compositionally biased stretch (basic and acidic residues) spans 689 to 704 (SDGKKEPSDKAVKKDA). The Nuclear localization signal motif lies at 708-716 (SKKKLKKVD). Residues lysine 717 and lysine 734 each participate in a glycyl lysine isopeptide (Lys-Gly) (interchain with G-Cter in SUMO2) cross-link. Threonine 739 carries the phosphothreonine modification. Phosphoserine occurs at positions 745, 757, and 760. Over residues 765 to 778 (DENKEDYTIPDEYR) the composition is skewed to basic and acidic residues. Residue lysine 768 forms a Glycyl lysine isopeptide (Lys-Gly) (interchain with G-Cter in SUMO2) linkage. Residues 799–830 (FYCKLCSLFYTNEEVAKNTHCSSLPHYQKLKK) form a Matrin-type zinc finger. Lysine 834 is subject to N6-acetyllysine; alternate. A Glycyl lysine isopeptide (Lys-Gly) (interchain with G-Cter in SUMO2); alternate cross-link involves residue lysine 834.

In terms of assembly, part of a complex consisting of SFPQ, NONO and MATR3. Interacts with AGO1 and AGO2. Part of a complex composed at least of ASH2L, EMSY, HCFC1, HSPA8, CCAR2, MATR3, MKI67, RBBP5, TUBB2A, WDR5 and ZNF335; this complex may have a histone H3-specific methyltransferase activity. Interacts with TARDBP. Part of the HDP-RNP complex composed of at least HEXIM1, PRKDC, XRCC5, XRCC6, paraspeckle proteins (SFPQ, NONO, PSPC1, RBM14, and MATR3) and NEAT1 RNA. Interacts with FUS. Interacts with IGF2BP1. Interacts with IGF2BP2 and IGF2BP3. Interacts with RBPMS.

It is found in the nucleus matrix. In terms of biological role, may play a role in transcription or may interact with other nuclear matrix proteins to form the internal fibrogranular network. In association with the SFPQ-NONO heteromer may play a role in nuclear retention of defective RNAs. Plays a role in the regulation of DNA virus-mediated innate immune response by assembling into the HDP-RNP complex, a complex that serves as a platform for IRF3 phosphorylation and subsequent innate immune response activation through the cGAS-STING pathway. Binds to N6-methyladenosine (m6A)-containing mRNAs and contributes to MYC stability by binding to m6A-containing MYC mRNAs. May bind to specific miRNA hairpins. This Rattus norvegicus (Rat) protein is Matrin-3 (Matr3).